The following is a 139-amino-acid chain: D-ribose pyranase (139 aa).

H20 (proton donor) is an active-site residue. Substrate contacts are provided by residues D28, H106, and 128 to 130 (YAN).

It belongs to the RbsD / FucU family. RbsD subfamily. In terms of assembly, homodecamer.

The protein resides in the cytoplasm. It catalyses the reaction beta-D-ribopyranose = beta-D-ribofuranose. It functions in the pathway carbohydrate metabolism; D-ribose degradation; D-ribose 5-phosphate from beta-D-ribopyranose: step 1/2. Its function is as follows. Catalyzes the interconversion of beta-pyran and beta-furan forms of D-ribose. The chain is D-ribose pyranase from Glaesserella parasuis serovar 5 (strain SH0165) (Haemophilus parasuis).